The sequence spans 603 residues: Pyruvate oxidase (603 aa).

Residues 1 to 191 form a core region; that stretch reads MVMKQTKQTN…WYASANSYQT (191 aa). Positions 192–342 are FAD-binding; sequence PLLPEPDVQA…ILAQVSERES (151 aa). The thiamine pyrophosphate binding stretch occupies residues 343-603; sequence TPWWQANLAN…LQHQIGQGGF (261 aa). Positions 447, 474, and 476 each coordinate Mg(2+).

The protein belongs to the TPP enzyme family. In terms of assembly, homotetramer. FAD serves as cofactor. It depends on Mg(2+) as a cofactor. The cofactor is thiamine diphosphate.

It carries out the reaction pyruvate + phosphate + O2 + H(+) = acetyl phosphate + H2O2 + CO2. Its function is as follows. Important for the aerobic growth. Decarboxylates pyruvate in four steps. The energy released is partially stored in acetyl phosphate. This is Pyruvate oxidase (pox5) from Lactiplantibacillus plantarum (strain ATCC BAA-793 / NCIMB 8826 / WCFS1) (Lactobacillus plantarum).